The primary structure comprises 212 residues: Mediator of RNA polymerase II transcription subunit 20 (212 aa).

Belongs to the Mediator complex subunit 20 family. As to quaternary structure, component of the Mediator complex, which is composed of MED1, MED4, MED6, MED7, MED8, MED9, MED10, MED11, MED12, MED13, MED13L, MED14, MED15, MED16, MED17, MED18, MED19, MED20, MED21, MED22, MED23, MED24, MED25, MED26, MED27, MED29, MED30, MED31, CCNC, CDK8 and CDC2L6/CDK11. The MED12, MED13, CCNC and CDK8 subunits form a distinct module termed the CDK8 module. Mediator containing the CDK8 module is less active than Mediator lacking this module in supporting transcriptional activation. Individual preparations of the Mediator complex lacking one or more distinct subunits have been variously termed ARC, CRSP, DRIP, PC2, SMCC and TRAP. Interacts with PPARG.

The protein localises to the nucleus. Its function is as follows. Component of the Mediator complex, a coactivator involved in the regulated transcription of nearly all RNA polymerase II-dependent genes. Mediator functions as a bridge to convey information from gene-specific regulatory proteins to the basal RNA polymerase II transcription machinery. Mediator is recruited to promoters by direct interactions with regulatory proteins and serves as a scaffold for the assembly of a functional preinitiation complex with RNA polymerase II and the general transcription factors. This is Mediator of RNA polymerase II transcription subunit 20 (MED20) from Macaca fascicularis (Crab-eating macaque).